The following is a 288-amino-acid chain: Alpha-acetolactate decarboxylase (288 aa).

An N-terminal signal peptide occupies residues methionine 1–glycine 23.

The protein belongs to the alpha-acetolactate decarboxylase family.

It carries out the reaction (2S)-2-acetolactate + H(+) = (R)-acetoin + CO2. It functions in the pathway polyol metabolism; (R,R)-butane-2,3-diol biosynthesis; (R,R)-butane-2,3-diol from pyruvate: step 2/3. Converts acetolactate into acetoin. This chain is Alpha-acetolactate decarboxylase, found in Methanosarcina mazei (strain ATCC BAA-159 / DSM 3647 / Goe1 / Go1 / JCM 11833 / OCM 88) (Methanosarcina frisia).